The primary structure comprises 529 residues: Peptide chain release factor 3 (529 aa).

The tr-type G domain maps to 11-279 (AKRRTFAIIS…GLVDWAPKPQ (269 aa)). GTP contacts are provided by residues 20–27 (SHPDAGKT), 88–92 (DTPGH), and 142–145 (NKLD).

Belongs to the TRAFAC class translation factor GTPase superfamily. Classic translation factor GTPase family. PrfC subfamily.

The protein localises to the cytoplasm. In terms of biological role, increases the formation of ribosomal termination complexes and stimulates activities of RF-1 and RF-2. It binds guanine nucleotides and has strong preference for UGA stop codons. It may interact directly with the ribosome. The stimulation of RF-1 and RF-2 is significantly reduced by GTP and GDP, but not by GMP. The chain is Peptide chain release factor 3 from Idiomarina loihiensis (strain ATCC BAA-735 / DSM 15497 / L2-TR).